Reading from the N-terminus, the 541-residue chain is Protein wntless homolog (541 aa).

At 1–15 (MAGAIIENMSTKKLC) the chain is on the cytoplasmic side. Residues 16 to 36 (IVGGILLVFQIIAFLVGGLIA) traverse the membrane as a helical segment. The Lumenal segment spans residues 37–232 (PGPTTAVSYM…GIHQNGGFTK (196 aa)). The segment at 101-232 (MEMSPWFQFM…GIHQNGGFTK (132 aa)) is interaction with Wnt proteins. Residues 233-253 (VWFAMKTFLTPSIFIIMVWYW) traverse the membrane as a helical segment. Residues 254–268 (RRITMMSRPPVLLEK) are Cytoplasmic-facing. A helical transmembrane segment spans residues 269 to 289 (VIFALGISMTFINIPVEWFSI). The Lumenal portion of the chain corresponds to 290 to 303 (GFDWTWMLLFGDIR). A helical transmembrane segment spans residues 304-324 (QGIFYAMLLSFWIIFCGEHMM). The Cytoplasmic portion of the chain corresponds to 325–331 (DQHERNH). Residues 332–352 (IAGYWKQVGPIAVGSFCLFIF) form a helical membrane-spanning segment. Topologically, residues 353-380 (DMCERGVQLTNPFYSIWTTDIGTELAMA) are lumenal. A helical membrane pass occupies residues 381–401 (FIIVAGICLCLYFLFLCFMVF). Residues 402 to 431 (QVFRNISGKQSSLPAMSKVRRLHYEGLIFR) lie on the Cytoplasmic side of the membrane. The chain crosses the membrane as a helical span at residues 432 to 452 (FKFLMLITLACAAMTVIFFIV). The Lumenal segment spans residues 453–471 (SQVTEGHWKWGGVTVQVNS). Residues 472-492 (AFFTGIYGMWNLYVFALMFLY) form a helical membrane-spanning segment. The Cytoplasmic segment spans residues 493–541 (APSHKNYGEDQSNGDLGVHSGEELQLTTTITHVDGPTEIYKLTRKEAQE).

It belongs to the wntless family. As to quaternary structure, interacts with WNT3A. Interacts with WNT1, WNT3 and WNT5A. N-glycosylated.

It is found in the golgi apparatus membrane. Its subcellular location is the cytoplasmic vesicle membrane. The protein resides in the cell membrane. The protein localises to the endoplasmic reticulum membrane. It localises to the early endosome membrane. In terms of biological role, regulates Wnt proteins sorting and secretion in a feedback regulatory mechanism. This reciprocal interaction plays a key role in the regulation of expression, subcellular location, binding and organelle-specific association of Wnt proteins. Plays also an important role in establishment of the anterior-posterior body axis formation during development. This Homo sapiens (Human) protein is Protein wntless homolog (WLS).